Consider the following 109-residue polypeptide: Fluoride-specific ion channel FluC 1 (109 aa).

Helical transmembrane passes span 21–41 (LFIN…GFFI), 52–72 (IILS…YFLY), and 84–104 (IIFC…GFWI).

This sequence belongs to the fluoride channel Fluc/FEX (TC 1.A.43) family.

Its subcellular location is the cell inner membrane. It carries out the reaction fluoride(in) = fluoride(out). In terms of biological role, fluoride-specific ion channel. Important for reducing fluoride concentration in the cell, thus reducing its toxicity. This chain is Fluoride-specific ion channel FluC 1, found in Prochlorococcus marinus (strain MIT 9312).